Reading from the N-terminus, the 206-residue chain is Methylthioribulose-1-phosphate dehydratase (206 aa).

Zn(2+) is bound by residues His-96 and His-98.

The protein belongs to the aldolase class II family. MtnB subfamily. It depends on Zn(2+) as a cofactor.

It carries out the reaction 5-(methylsulfanyl)-D-ribulose 1-phosphate = 5-methylsulfanyl-2,3-dioxopentyl phosphate + H2O. Its pathway is amino-acid biosynthesis; L-methionine biosynthesis via salvage pathway; L-methionine from S-methyl-5-thio-alpha-D-ribose 1-phosphate: step 2/6. Catalyzes the dehydration of methylthioribulose-1-phosphate (MTRu-1-P) into 2,3-diketo-5-methylthiopentyl-1-phosphate (DK-MTP-1-P). This Azotobacter vinelandii (strain DJ / ATCC BAA-1303) protein is Methylthioribulose-1-phosphate dehydratase.